The primary structure comprises 152 residues: TOMM20-like protein 1 (152 aa).

The Mitochondrial intermembrane segment spans residues 1-6; sequence MPSVRL. A helical membrane pass occupies residues 7-27; sequence GVGLLAGLAAGGAVVLLSYCV. Topologically, residues 28 to 152 are cytoplasmic; the sequence is YLDWRRHRDP…STEHLKDDPD (125 aa).

The protein belongs to the Tom20 family.

The protein localises to the mitochondrion outer membrane. The polypeptide is TOMM20-like protein 1 (Tomm20l) (Mus musculus (Mouse)).